The primary structure comprises 366 residues: Growth hormone secretagogue receptor type 1 (366 aa).

Topologically, residues 1-40 (MWNATPSEEPGPNLTLPDLGWDAPPENDSLVEELLPLFPT) are extracellular. Residues Asn13 and Asn27 are each glycosylated (N-linked (GlcNAc...) asparagine). The helical transmembrane segment at 41–66 (PLLAGVTATCVALFVVGIAGNLLTML) threads the bilayer. Residues 67–72 (VVSRFR) lie on the Cytoplasmic side of the membrane. Residues 73–96 (EMRTTTNLYLSSMAFSDLLIFLCM) traverse the membrane as a helical segment. Residues 97–117 (PLDLFRLWQYRPWNLGNLLCK) are Extracellular-facing. An intrachain disulfide couples Cys116 to Cys198. A helical membrane pass occupies residues 118–139 (LFQFVSESCTYATVLTITALSV). Residues 140–162 (ERYFAICFPLRAKVVVTKGRVKL) lie on the Cytoplasmic side of the membrane. A helical transmembrane segment spans residues 163 to 183 (VILVIWAVAFCSAGPIFVLVG). Over 184 to 211 (VEHDNGTDPRDTNECRATEFAVRSGLLT) the chain is Extracellular. The helical transmembrane segment at 212–235 (VMVWVSSVFFFLPVFCLTVLYSLI) threads the bilayer. The Cytoplasmic portion of the chain corresponds to 236–263 (GRKLWRRKRGEAAVGSSLRDQNHKQTVK). A helical membrane pass occupies residues 264 to 285 (MLAVVVFAFILCWLPFHVGRYL). The Extracellular portion of the chain corresponds to 286–302 (FSKSLEPGSVEIAQISQ). A helical membrane pass occupies residues 303–326 (YCNLVSFVLFYLSAAINPILYNIM). At 327–366 (SKKYRVAVFKLLGFEPFSQRKLSTLKDESSRAWTESSINT) the chain is on the cytoplasmic side.

The protein belongs to the G-protein coupled receptor 1 family. As to expression, pituitary and hypothalamus.

Its subcellular location is the cell membrane. Receptor for ghrelin, coupled to G-alpha-11 proteins. Stimulates growth hormone secretion. Also binds other growth hormone releasing peptides (GHRP) (e.g. Met-enkephalin and GHRP-6) as well as non-peptide, low molecular weight secretagogues (e.g. L-692,429, MK-0677, adenosine). In Sus scrofa (Pig), this protein is Growth hormone secretagogue receptor type 1 (GHSR).